The primary structure comprises 439 residues: Xaa-Pro dipeptidase (439 aa).

Residues aspartate 244, aspartate 255, histidine 335, glutamate 380, and glutamate 419 each coordinate Mn(2+).

Belongs to the peptidase M24B family. Bacterial-type prolidase subfamily. Mn(2+) serves as cofactor.

The catalysed reaction is Xaa-L-Pro dipeptide + H2O = an L-alpha-amino acid + L-proline. Its function is as follows. Splits dipeptides with a prolyl residue in the C-terminal position. The polypeptide is Xaa-Pro dipeptidase (Shewanella amazonensis (strain ATCC BAA-1098 / SB2B)).